A 3898-amino-acid polypeptide reads, in one-letter code: MELNHFELLYKTNKQKPMGVEEPVYDVTGRPLFGDPSEVHPQSTLKLPHDRGRGNIKTTLKNLPRRGDCRSGNHLGPVSGIYVKPGPVFYQDYMGPVYHRAPLEFFDEAQFCEVTKRIGRVTGSDGKLYHIYVCIDGCILLKLAKRGEPRTLKWIRNLTDCPLWVTSCSDDGASASKEKKPDRINKGKLKIAPKEHEKDSRTKPPDATIVVEGVKYQVKKKGKVKGKNTQDGLYHNKNKPPESRKKLEKALLAWAVIAIMLYQPVAAENITQWNLRDNGTNGIQHAMYLRGVSRSLHGIWPEKICKGVPTYLATDTELREIQGMMVASEGTNYTCCKLQRHEWNKHGWCNWYNIDPWIQLMNRTQANLAEGPPSKECAVTCRYDKNADINVVTQARNRPTTLTGCKKGTNFSFAGTVIEGPCNFNVSVEDILYGDHECGSLLQDTALYLVDGMTNTIERARQGAARVTSWLGRQLRIAGKRLEGRSKTWFGAYALSPYCNVTTKIGYIWYTNNCTPACLPKNTKIIGPGKFDTNAEDGKILHEMGGHLSEFLLLSLVVLSDFAPETASALYLILHYVIPQSHEEPEGCDTNQLNLTVELRTEDVIPSSVWNVGKYVCVRPDWWPYETKVALLFEEAGQVVKLALRALRDLTRVWNSASTTAFLICLIKVLRGQVVQGVIWLLLVTGAQGRLACKEDHRYAISTTNEIGLHGAEGLTTTWKEYNHNLQLDDGTVKAICMAGSFKVTALNVVSRRYLASLHKDALPTSVTFELLFDGTSPLTEEMGDDFGFGLCPYDTSPVVKGKYNTTLLNGSAFYLVCPIGWTGVIECTAVSPTTLRTEVVKTFRREKPFPYRRDCVTTTVENEDLFYCKWGGNWTCVKGEPVTYTGGPVKQCRWCGFDFNEPDGLPHYPIGKCILANETGYRIVDSTDCNRDGVVISTEGSHECLIGNTTVKVHALDERLGPMPCRPKEIVSSAGPVRKTSCTFNYAKTLRNRYYEPRDSYFQQYMLKGEYQYWFDLDVTDRHSDYFAEFIVLVVVALLGGRYVLWLIVTYIVLTEQLAAGLQLGQGEVVLIGNLITHTDIEVVVYFLLLYLVMRDEPIKKWILLLFHAMTNNPVKTITVALLMVSGVAKGGKIDGGWQRLPETNFDIQLALTVIVVAVMLLAKKDPTTVPLVITVATLRTAKITNGLSTDLAIATVSTALLTWTYISDYYKYKTLLQYLISTVTGIFLIRVLKGVGELDLHTPTLPSYRPLFFILVYLISTAVVTRWNLDIAGLLLQCVPTLLMVFTMWADILTLILILPTYELTKLYYLKEVKIGAERGWLWKTNFKRVNDIYEVDQAGEGVYLFPSKQKTGTITGTMLPLIKAILISCISNKWQFIYLLYLIFEVSYYLHKKIIDEIAGGTNFISRLVAALIEANWAFDNEEVRGLKKFFLLSSRVKELIIKHKVRNEVMVHWFGDEEVYGMPKLVGLVKAATLSKNKHCILCTVCENREWRGETCPKCGRFGPPVTCGMTLADFEEKHYKRIFFREDQSEGPVREEYAGYLQYRARGQLFLRNLPVLATKVKMLLVGNLGTEVGDLEHLGWVLRGPAVCKKVTEHEKCTTSIMDKLTAFFGVMPRGTTPRAPVRFPTSLLKIRRGLETGWAYTHQGGISSVDHVTCGKDLLVCDTMGRTRVVCQSNNKMTDESEYGVKTDSGCPEGARCYVFNREAVNISGTKGAMVHLQKTGGEFTCVTASGTPAFFDLKNLKGWSGLPIFEASSGRVVGRVKVGKNEDSKPTKLMSGIQTVSKSTTDLTEMVKKITTMNRGEFRQITLATGAGKTTELPRSVIEEIGRHKRVLVLIPLRAAAESVYQYMRQKHPSIAFNLRIGEMKEGDMATGITYASYGYFCQMPQPKLRAAMVEYSFIFLDEYHCSTPEQLAIMGKIHRFSENLRVVAMTATPAGTVTTTGQKHPIEEYIAPEVMKGEDLGPEYLDIAGLKIPVEEMKSNMLVFVPTRNMAVETAKKLKAKGYNSGYYYSGEDPSNLRVVTSQSPYVVVATNAIESGVTLPDLDVVVDTGLKCEKRIRLSPKMPFIVTGLKRMAVTIGEQAQRRGRVGRVKPGRYYRSQETPVGSKDYHYDLLQAQRYGIEDGINITKSFREMNYDWSLYEEDSLMITQLEILNNLLISEELPMAVKNIMARTDHPEPIQLAYNSYETQVPVLFPKIKNGEVTDSYDNYTFLNARKLGDDVPPYVYATEDEDLAVELLGLDWPDPGNQGTVEAGRALKQVVGLSTAENALLVALFGYVGYQALSKRHIPVVTDIYSIEDHRLEDTTHLQYAPNAIKTEGKETELKELAQGDVQRCMEAMTNYARDGIQFMKSQALKVKETPTYKETMDTVADYVKKFMEALADSKEDIIKYGLWGTHTALYKSIGARLGNETAFATLVVKWLAFGGESIADHVKQAATDLVVYYIINRPQFPGDTETQQEGRKFVASLLVSALATYTYKSWNYNNLSKIVEPALATLPYAATALKLFAPTRLESVVILSTAIYKTYLSIRRGKSDGLLGTGVSAAMEIMSQNPVSVGIAVMLGVGAVAAHNAIEASEQKRTLLMKVFVKNFLDQAATDELVKESPEKIIMALFEAVQTVGNPLRLVYHVYGVFYKGWEAKELAQRTAGRNLFTLIMFEAVELLGVDSEGKIRQLSSNYILELLYKFRDSIKSSVRQMAISWAPAPFSCDWTPTDDRIGLPQDNFLRVETKCPCGYKMKAVKNCAGELRLLEEEGSFLCRNKFGRGSRNYRVTKYYDDNLSEIKPVIRMEGHVELYYKGATIKLDFNNSKTILATDKWEVDHSTLVRVLKRHTGAGYCGAYLGEKPNHKHLIERDCATITKDKVCFLKMKRGCAFTYDLSLHNLTRLIELVHKNNLEDKEIPAVTVTTWLAYTFVNEDIGTIKPAFGEKITPEMQEEITLQPAVLVDATDVTVTVVGETPTMTTGETPTTFTSSGPDPKGQQVLKLGVGEGQYPGTNPQRASLHEAIQSADERPSVLILGSDKATSNRVKTVKNVKVYRGRDPLEVRDMMRRGKILVIALSRVDNALLKFVDYKGTFLTRETLEALSLGRPKKKNITKAEAQWLLRLEDQMEELPDWFAAGEPIFLEANIKHDRYHLVGDIATIKEKAKQLGATDSTKISKEVGAKVYSMKLSNWVMQEENKQSNLTPLFEELLQQCPPGGQNKTAHMVSAYQLAQGNWMPTSCHVFMGTISARRTKTHPYEAYVKLRELVEEHKMKTLCPGSSLRNDNEWVIGKIKYQGNLRTKHMLNPGKVAEQLHREGHRHNVYNKTIGSVMTATGIRLEKLPVVRAQTDTTNFHQAIRDKIDKEENLQTPGLHKKLMEVFNALKRPELESSYDAVEWEELERGINRKGAAGFFERKNIGEILDSEKIKVEEIIDNLKKGRNIKYYETAIPKNEKRDVNDDWTAGDFVDEKKPRVIQYPEAKTRLAITKVMYKWVKQKPVVIPGYEGKTPLFQIFDKVKKEWDQFQNPVAVSFDTKAWDTQVTTNDLELIKDIQKYYFKKKWHKFIDTLTMHMSEVPVITADGEVYIRKGQRGSGQPDTSAGNSMLNVLTMVYAFCEATGVPYKSFDRVAKIHVCGDDGFLITERALGEKFASKGVQILYEAGKPQKITEGDKMKVAYQFADIEFCSHTPIQVRWSDNTSSYMPGRNTTTILAKMATRLDSSGERGTIAYEKAVAFSFLLMYSWNPLIRRICLLVLSTELQVKPGKSTTYYYEGDPISAYKEVIGHNLFDLKRTSFEKLAKLNLSMSVLGAWTRHTSKRLLQDCVNMGVKEGNWLVNADRLVSSKTGNRYVPGEGHTLQGRHYEELALARKQINSFQGTDRYNLGPIVNMVLRRLRVMMMTLIGRGV.

The Peptidase C53 domain maps to 1–168 (MELNHFELLY…TDCPLWVTSC (168 aa)). Active-site for N-terminal protease activity residues include E22, H49, and C69. Residues 112 to 138 (CEVTKRIGRVTGSDGKLYHIYVCIDGC) form a zinc-binding TRASH domain region. N157 carries an N-linked (GlcNAc...) asparagine; by host glycan. The interval 221 to 242 (KGKVKGKNTQDGLYHNKNKPPE) is disordered. N-linked (GlcNAc...) asparagine; by host glycans are attached at residues N269, N278, and N332. Cystine bridges form between C305/C349 and C335/C336. 2 N-linked (GlcNAc...) asparagine; by host glycosylation sites follow: N362 and N367. 2 disulfides stabilise this stretch: C377–C422 and C381–C405. N-linked (GlcNAc...) asparagine; by host glycosylation is found at N410, N425, N500, and N594. C693 and C737 are disulfide-bonded. 5 N-linked (GlcNAc...) asparagine; by host glycosylation sites follow: N805, N810, N874, N918, and N949. The next 9 helical transmembrane spans lie at 1031-1051 (FIVL…LIVT), 1070-1090 (VVLI…YFLL), 1104-1124 (ILLL…VALL), 1140-1164 (QRLP…MLLA), 1189-1209 (LSTD…TYIS), 1217-1237 (LLQY…LKGV), 1247-1267 (LPSY…AVVT), 1281-1301 (VPTL…ILIL), and 1360-1380 (TMLP…WQFI). Residues 1441-1589 (KELIIKHKVR…DLEHLGWVLR (149 aa)) form the Peptidase C74 domain. Residues H1447, E1461, and C1512 each act as for cysteine protease NS2 activity in the active site. A helical transmembrane segment spans residues 1568–1588 (MLLVGNLGTEVGDLEHLGWVL). The Peptidase S31 domain occupies 1590–1763 (GPAVCKKVTE…LPIFEASSGR (174 aa)). Residues H1658 and D1695 each act as charge relay system; for serine protease NS3 activity in the active site. The N-linked (GlcNAc...) asparagine; by host glycan is linked to N1713. The active-site Charge relay system; for serine protease NS3 activity is the S1752. A Helicase ATP-binding domain is found at 1802-1960 (ITTMNRGEFR…QKHPIEEYIA (159 aa)). ATP is bound at residue 1815–1822 (LATGAGKT). The DEAH box signature appears at 1910–1913 (DEYH). Residues 1978–2179 (GLKIPVEEMK…ELPMAVKNIM (202 aa)) form the Helicase C-terminal domain. Residues N2134, N2217, N2419, N2494, N2787, N2815, and N2891 are each glycosylated (N-linked (GlcNAc...) asparagine; by host). A compositionally biased stretch (low complexity) spans 2968–2980 (PTMTTGETPTTFT). Residues 2968-2987 (PTMTTGETPTTFTSSGPDPK) are disordered. 3 N-linked (GlcNAc...) asparagine; by host glycosylation sites follow: N3103, N3211, and N3316. GTP contacts are provided by T3500 and L3502. One can recognise a RdRp catalytic domain in the interval 3519–3642 (PVAVSFDTKA…ITERALGEKF (124 aa)). N3689 is a glycosylation site (N-linked (GlcNAc...) asparagine; by host). Position 3697 (R3697) interacts with GTP. A glycan (N-linked (GlcNAc...) asparagine; by host) is linked at N3698. GTP is bound at residue K3705. An N-linked (GlcNAc...) asparagine; by host glycan is attached at N3794.

The protein belongs to the pestivirus polyprotein family. Interacts (via N-terminus) with host SP1; this interaction induces proteasomal degradation of SP1 with subsequent down-regulation of HDAC1 and ISG15 expression thereby counteracting the host innate immunity. Interacts (via C-terminus) with host IRF3. As to quaternary structure, interacts with host OS9. In terms of assembly, homodimer; disulfide-linked. Interacts with host RPSA. Homodimer; disulfide-linked. Heterodimer with E1; disulfide-linked. As to quaternary structure, homodimer; disulfide-linked. Heterodimer with E1; disulfide-linked. Interacts with host TRX2. Interacts with host receptor ADAM17 (via metalloproteinase domain); this interaction allows binding and probably entry of the virus into the host cell. Interacts with host ANXA2; this interaction allows binding and probably entry of the virus into the host cell. Interacts with host MERTK; this interaction allows binding and probably entry of the virus into the host cell. In terms of assembly, interacts with host TRAF6; this interaction inhibits host NF-kappa-B pathway. Interacts with NS5B; this interaction enhances RNA-dependent RNA polymerase activity. Interacts with protein NS4A. Interacts with host RAB5, this interaction facilitates the formation of NS4B-related complex. Interacts with host FTH1; this interaction plays a positive role in viral anti-apoptosis. As to quaternary structure, interacts with RNA-directed RNA polymerase. Interacts with host RSAD2; this interaction inhibits viral replication. In terms of assembly, interacts with NS5A; this interaction promotes viral replication. Post-translationally, heavily glycosylated. In terms of processing, the viral RNA of pestiviruses is expressed as a single polyprotein which undergoes post-translational proteolytic processing resulting in the production of at least eleven individual proteins. The N-terminal protease cleaves itself from the nascent polyprotein autocatalytically and thereby generates the N-terminus of the adjacent viral capsid protein C. Cleavage between E2 and p7 is partial.

The protein localises to the virion. The protein resides in the host membrane. Its subcellular location is the virion membrane. It is found in the host cell surface. It localises to the host cytoplasm. The enzyme catalyses Leu is conserved at position P1 for all four cleavage sites. Alanine is found at position P1' of the NS4A-NS4B cleavage site, whereas serine is found at position P1' of the NS3-NS4A, NS4B-NS5A and NS5A-NS5B cleavage sites.. It carries out the reaction RNA(n) + a ribonucleoside 5'-triphosphate = RNA(n+1) + diphosphate. It catalyses the reaction a ribonucleoside 5'-triphosphate + H2O = a ribonucleoside 5'-diphosphate + phosphate + H(+). The catalysed reaction is ATP + H2O = ADP + phosphate + H(+). Its function is as follows. Leader cysteine autoprotease that cleaves itself from the nascent polyprotein during translation of the viral mRNA. Once released, plays a role in the inhibition of host innate immune response by interacting with host IRF3 and inducing its proteasomal degradation. Packages viral RNA to form a viral nucleocapsid and thereby protects viral RNA. Also plays a role in transcription regulation. Protects the incoming virus against IFN-induced effectors. Functionally, plays a role in viral entry. Interacts with host RPSA that acts as a cellular attachment receptor for the virus. Also possesses intrinsic ribonuclease (RNase) activity that can inhibit the production of type I interferon and assist in the development of persistent infections. Cleaves preferentially NpU bonds. Binds to heparan sulfate on the host cells for entry. In terms of biological role, plays a role in cell attachment and subsequent fusion of viral and cellular membranes. Therefore, mediates together with envelope glycoprotein E2 the viral entry. Its function is as follows. Plays a role in cell attachment and subsequent fusion of viral and cellular membranes. Therefore, mediates together with envelope glycoprotein E1 the viral entry. Binds to host ADAM17 receptor for entry. Binds to host ANXA2 for entry. Binds to host MERTK for entry. Plays an essential role in the virus replication cycle by acting as a viroporin. Forms ion conductive pores, which alters the cell permeability allowing the transport of ions and other small molecules. Functionally, autoprotease that associates with the host chaperone JIV and cleaves the NS2-3 protein between NS2 and NS3. Also plays a role in the formation of infectious particles. In terms of biological role, plays a role in the regulation of viral RNA replication. Its function is as follows. Multifunctional protein that contains an N-terminal protease and a C-terminal helicase, playing essential roles in viral polyprotein processing and viral genome replication. The chymotrypsin-like serine protease activity utilizes NS4A as an essential cofactor and catalyzes the cleavage of the polyprotein leading to the release of NS4A, NS4B, NS5A, and NS5B. Plays a role in the inhibition of host NF-kappa-B activation by interacting with and inhibiting host TRAF6. Interacts with NS5B to enhance RNA-dependent RNA polymerase activity. Acts as a cofactor for the NS3 protease activity. Functionally, induces a specific membrane alteration that serves as a scaffold for the virus replication complex. Antagonizes host cell apoptosis by interacting with host ferritin heavy chain. The ORF4 protein physically binds host FTH1/FHC, resulting in the reduction of FTH1 protein levels in host cells. Reduction of FTH1 concentration further inhibits the accumulation of reactive oxygen in host cells, leading to reduced apoptosis. In terms of biological role, regulates viral RNA replication by interacting with the 3'-untranslated region of viral RNA in a dose-dependent manner. At small concentrations promotes viral synthesis by interacting with the polymerase NS5B while at large concentrations, inhibits replication. Its function is as follows. Replicates the viral (+) and (-) genome. In Sus scrofa (Pig), this protein is Genome polyprotein.